A 546-amino-acid chain; its full sequence is Chaperonin GroEL 5 (546 aa).

ATP-binding positions include Thr-30–Pro-33, Lys-51, Asp-87–Thr-91, Gly-415, and Asp-495.

This sequence belongs to the chaperonin (HSP60) family. Forms a cylinder of 14 subunits composed of two heptameric rings stacked back-to-back. Interacts with the co-chaperonin GroES.

Its subcellular location is the cytoplasm. It carries out the reaction ATP + H2O + a folded polypeptide = ADP + phosphate + an unfolded polypeptide.. Functionally, together with its co-chaperonin GroES, plays an essential role in assisting protein folding. The GroEL-GroES system forms a nano-cage that allows encapsulation of the non-native substrate proteins and provides a physical environment optimized to promote and accelerate protein folding. The sequence is that of Chaperonin GroEL 5 from Paraburkholderia xenovorans (strain LB400).